The primary structure comprises 262 residues: Enoyl-[acyl-carrier-protein] reductase [NADH] FabI (262 aa).

NAD(+)-binding positions include G13, 19–20, Q40, 64–65, and I92; these read SI and DV. A95 lines the substrate pocket. Residues Y146 and Y156 each act as proton acceptor in the active site. NAD(+)-binding positions include K163 and 192–196; that span reads IRTLA.

Belongs to the short-chain dehydrogenases/reductases (SDR) family. FabI subfamily. Homotetramer.

The enzyme catalyses a 2,3-saturated acyl-[ACP] + NAD(+) = a (2E)-enoyl-[ACP] + NADH + H(+). The catalysed reaction is (2E)-butenoyl-[ACP] + NADH + H(+) = butanoyl-[ACP] + NAD(+). It catalyses the reaction (2E)-decenoyl-[ACP] + NADH + H(+) = decanoyl-[ACP] + NAD(+). It carries out the reaction (2E)-hexadecenoyl-[ACP] + NADH + H(+) = hexadecanoyl-[ACP] + NAD(+). The enzyme catalyses (2E,9Z)-hexadecadienoyl-[ACP] + NADH + H(+) = (9Z)-hexadecenoyl-[ACP] + NAD(+). The catalysed reaction is (2E)-5-methylhexenoyl-[ACP] + NADH + H(+) = 5-methylhexanoyl-[ACP] + NAD(+). It participates in lipid metabolism; fatty acid biosynthesis. Its pathway is cofactor biosynthesis; biotin biosynthesis. With respect to regulation, inhibited by diazaborines, triclosan (5-chloro-2-2,4-dichlorophenoxyphenol), 1,4-disubstituted imidazoles, 1,4-benzodiazepine derivatives, naphthyridinone derivatives, luteolin and curcumin. The antibiotic diazaborine interferes with the activity by binding to the protein and NAD. Its function is as follows. Catalyzes the reduction of a carbon-carbon double bond in an enoyl moiety that is covalently linked to an acyl carrier protein (ACP). Involved in the elongation cycle of fatty acid which are used in the lipid metabolism and in the biotin biosynthesis. The chain is Enoyl-[acyl-carrier-protein] reductase [NADH] FabI (fabI) from Escherichia coli (strain K12).